Reading from the N-terminus, the 1028-residue chain is Carbamoyl phosphate synthase large chain (1028 aa).

The interval 1–409 is carboxyphosphate synthetic domain; the sequence is MPPRRDLKKI…ALMKALRGLE (409 aa). ATP is bound by residues Arg-129, Arg-169, Gly-175, Gly-176, Glu-208, Val-210, Glu-215, Gly-241, Val-242, His-243, Gln-285, and Glu-299. Residues 133-328 enclose the ATP-grasp 1 domain; that stretch reads QEAMQRIGLE…IAKIAALLAV (196 aa). Mg(2+) is bound by residues Gln-285, Glu-299, and Asn-301. The Mn(2+) site is built by Gln-285, Glu-299, and Asn-301. Residues 410–549 are oligomerization domain; it reads RDVRALAGVR…YSTYELEDEV (140 aa). The carbamoyl phosphate synthetic domain stretch occupies residues 550–933; the sequence is WPSQKPKVVI…AYYKAELGAG (384 aa). Residues 674 to 866 form the ATP-grasp 2 domain; sequence HALCQRLGIP…LAKLAALIAV (193 aa). Arg-710, Arg-750, Leu-752, Glu-757, Gly-782, Val-783, His-784, Ser-785, Gln-825, and Glu-837 together coordinate ATP. 3 residues coordinate Mg(2+): Gln-825, Glu-837, and Asn-839. Gln-825, Glu-837, and Asn-839 together coordinate Mn(2+). One can recognise an MGS-like domain in the interval 934 to 1028; that stretch reads QRLPLSGRVR…QDWHQKAPRG (95 aa). The allosteric domain stretch occupies residues 934-1028; sequence QRLPLSGRVR…QDWHQKAPRG (95 aa).

This sequence belongs to the CarB family. As to quaternary structure, composed of two chains; the small (or glutamine) chain promotes the hydrolysis of glutamine to ammonia, which is used by the large (or ammonia) chain to synthesize carbamoyl phosphate. Tetramer of heterodimers (alpha,beta)4. Mg(2+) serves as cofactor. The cofactor is Mn(2+).

It catalyses the reaction hydrogencarbonate + L-glutamine + 2 ATP + H2O = carbamoyl phosphate + L-glutamate + 2 ADP + phosphate + 2 H(+). It carries out the reaction hydrogencarbonate + NH4(+) + 2 ATP = carbamoyl phosphate + 2 ADP + phosphate + 2 H(+). It functions in the pathway amino-acid biosynthesis; L-arginine biosynthesis; carbamoyl phosphate from bicarbonate: step 1/1. The protein operates within pyrimidine metabolism; UMP biosynthesis via de novo pathway; (S)-dihydroorotate from bicarbonate: step 1/3. Functionally, large subunit of the glutamine-dependent carbamoyl phosphate synthetase (CPSase). CPSase catalyzes the formation of carbamoyl phosphate from the ammonia moiety of glutamine, carbonate, and phosphate donated by ATP, constituting the first step of 2 biosynthetic pathways, one leading to arginine and/or urea and the other to pyrimidine nucleotides. The large subunit (synthetase) binds the substrates ammonia (free or transferred from glutamine from the small subunit), hydrogencarbonate and ATP and carries out an ATP-coupled ligase reaction, activating hydrogencarbonate by forming carboxy phosphate which reacts with ammonia to form carbamoyl phosphate. In Thermus thermophilus (strain ATCC 27634 / DSM 579 / HB8), this protein is Carbamoyl phosphate synthase large chain.